The primary structure comprises 197 residues: Recombination protein RecR (197 aa).

A C4-type zinc finger spans residues 57–72 (CSVCFAITEDDPCWIC). The Toprim domain occupies 79 to 174 (GTICVVEEPQ…KVTRLAHGIP (96 aa)).

This sequence belongs to the RecR family.

Functionally, may play a role in DNA repair. It seems to be involved in an RecBC-independent recombinational process of DNA repair. It may act with RecF and RecO. This is Recombination protein RecR from Citrifermentans bemidjiense (strain ATCC BAA-1014 / DSM 16622 / JCM 12645 / Bem) (Geobacter bemidjiensis).